The sequence spans 37 residues: L-amino-acid oxidase (37 aa).

This sequence belongs to the flavin monoamine oxidase family. FIG1 subfamily. Homodimer; non-covalently linked. FAD serves as cofactor. Post-translationally, N-Glycosylated. In terms of tissue distribution, expressed by the venom gland.

It is found in the secreted. It carries out the reaction an L-alpha-amino acid + O2 + H2O = a 2-oxocarboxylate + H2O2 + NH4(+). It catalyses the reaction L-leucine + O2 + H2O = 4-methyl-2-oxopentanoate + H2O2 + NH4(+). The catalysed reaction is L-phenylalanine + O2 + H2O = 3-phenylpyruvate + H2O2 + NH4(+). The enzyme catalyses L-tryptophan + O2 + H2O = indole-3-pyruvate + H2O2 + NH4(+). It carries out the reaction L-methionine + O2 + H2O = 4-methylsulfanyl-2-oxobutanoate + H2O2 + NH4(+). It catalyses the reaction L-isoleucine + O2 + H2O = (S)-3-methyl-2-oxopentanoate + H2O2 + NH4(+). The catalysed reaction is L-arginine + O2 + H2O = 5-guanidino-2-oxopentanoate + H2O2 + NH4(+). The enzyme catalyses L-histidine + O2 + H2O = 3-(imidazol-5-yl)pyruvate + H2O2 + NH4(+). It carries out the reaction L-valine + O2 + H2O = 3-methyl-2-oxobutanoate + H2O2 + NH4(+). In terms of biological role, catalyzes an oxidative deamination of predominantly hydrophobic and aromatic L-amino acids, thus producing hydrogen peroxide that may contribute to the diverse toxic effects of this enzyme. Is highly active on L-Leu, L-Met, moderately active on L-Arg, L-Trp, L-Phe, L-Val, L-His, and L-Ile, and is weakly or not active on L-Cys, L-Lys, L-Ala, L-Thr, L-Asp, L-Ser, and L-Pro. Exhibits diverse biological activities, such as hemorrhage, edema, apoptosis of vascular endothelial cells or tumor cell lines, as well as regulation of platelet aggregation. Effects of snake L-amino oxidases on platelets are controversial, since they either induce aggregation or inhibit agonist-induced aggregation. These different effects are probably due to different experimental conditions. This protein induce hemolysis and has antibacterial and antiparasitic activities (against the Gram-positive S.aureus). Tested in vivo, this protein significantly inhibits Ehrlich ascite tumors growth and induces an influx of polymorphonuclear cells, as well as spontaneous liberation of hydrogen peroxide from peritoneal macrophages. This is L-amino-acid oxidase from Bothrops jararaca (Jararaca).